The primary structure comprises 369 residues: Flagellar P-ring protein (369 aa).

An N-terminal signal peptide occupies residues 1-22; that stretch reads MLNFKHLMAAALLLSTSLGVQA.

Belongs to the FlgI family. In terms of assembly, the basal body constitutes a major portion of the flagellar organelle and consists of four rings (L,P,S, and M) mounted on a central rod.

Its subcellular location is the periplasm. The protein resides in the bacterial flagellum basal body. Functionally, assembles around the rod to form the L-ring and probably protects the motor/basal body from shearing forces during rotation. The chain is Flagellar P-ring protein from Pseudomonas fluorescens (strain ATCC BAA-477 / NRRL B-23932 / Pf-5).